Consider the following 208-residue polypeptide: Histone H1t (208 aa).

Positions 1 to 16 (MSETVPAASAGAVPAV) are enriched in low complexity. Residues 1 to 40 (MSETVPAASAGAVPAVMEKPLTKKRGKKPAGLTSASRKAP) form a disordered region. The residue at position 9 (Ser-9) is a Phosphoserine. The 74-residue stretch at 40–113 (PNLSVSKLIT…GASGSFKLSK (74 aa)) folds into the H15 domain. Position 58 is a citrulline (Arg-58). The interval 102-208 (GTGASGSFKL…ANIRKATSRK (107 aa)) is disordered. The segment covering 111-136 (LSKKVLPKSTRRKANKSASAKTKKLV) has biased composition (basic residues). Ser-143 is subject to Phosphoserine. Over residues 148–157 (KTNKRAKKPR) the composition is skewed to basic residues. Thr-159 carries the post-translational modification Phosphothreonine. The segment covering 163–175 (KAVRSGRKAKGAK) has biased composition (basic residues). Ser-167 and Ser-182 each carry phosphoserine. A compositionally biased stretch (basic residues) spans 187–208 (RATKPKLTQHHKANIRKATSRK).

This sequence belongs to the histone H1/H5 family. In terms of processing, phosphorylated in early spermatids. Citrullination at Arg-58 (H1R54ci) by PADI4 takes place within the DNA-binding site of H1 and results in its displacement from chromatin and global chromatin decondensation, thereby promoting pluripotency and stem cell maintenance.

Functionally, testis-specific histone H1 that forms less compacted chromatin compared to other H1 histone subtypes. Formation of more relaxed chromatin may be required to promote chromatin architecture required for proper chromosome regulation during meiosis, such as homologous recombination. Histones H1 act as linkers that bind to nucleosomes and compact polynucleosomes into a higher-order chromatin configuration. This is Histone H1t from Macaca mulatta (Rhesus macaque).